The primary structure comprises 171 residues: Probable chorismate pyruvate-lyase (171 aa).

Substrate contacts are provided by methionine 36, arginine 78, leucine 116, and glutamate 157.

This sequence belongs to the UbiC family.

Its subcellular location is the cytoplasm. It carries out the reaction chorismate = 4-hydroxybenzoate + pyruvate. It functions in the pathway cofactor biosynthesis; ubiquinone biosynthesis. Functionally, removes the pyruvyl group from chorismate, with concomitant aromatization of the ring, to provide 4-hydroxybenzoate (4HB) for the ubiquinone pathway. This is Probable chorismate pyruvate-lyase from Bartonella henselae (strain ATCC 49882 / DSM 28221 / CCUG 30454 / Houston 1) (Rochalimaea henselae).